Consider the following 142-residue polypeptide: Large ribosomal subunit protein uL13 (142 aa).

Belongs to the universal ribosomal protein uL13 family. In terms of assembly, part of the 50S ribosomal subunit.

In terms of biological role, this protein is one of the early assembly proteins of the 50S ribosomal subunit, although it is not seen to bind rRNA by itself. It is important during the early stages of 50S assembly. In Lachnospira eligens (strain ATCC 27750 / DSM 3376 / VPI C15-48 / C15-B4) (Eubacterium eligens), this protein is Large ribosomal subunit protein uL13.